Reading from the N-terminus, the 230-residue chain is UPF0173 metal-dependent hydrolase RHOS4_08540 (230 aa).

Belongs to the UPF0173 family.

This chain is UPF0173 metal-dependent hydrolase RHOS4_08540, found in Cereibacter sphaeroides (strain ATCC 17023 / DSM 158 / JCM 6121 / CCUG 31486 / LMG 2827 / NBRC 12203 / NCIMB 8253 / ATH 2.4.1.) (Rhodobacter sphaeroides).